We begin with the raw amino-acid sequence, 841 residues long: Probable outer membrane protein pmp2 (841 aa).

Residues 1–24 (MKIPLRFLLISLVPTLSMSNLLGA) form the signal peptide. Positions 537–841 (GAPYEKRFWV…NVDAGSKIKF (305 aa)) constitute an Autotransporter domain.

It belongs to the PMP outer membrane protein family.

The protein resides in the secreted. It localises to the cell wall. It is found in the cell outer membrane. The sequence is that of Probable outer membrane protein pmp2 (pmp2) from Chlamydia pneumoniae (Chlamydophila pneumoniae).